A 230-amino-acid chain; its full sequence is DNA repair protein rdl1 (230 aa).

Interacts with rlp1 and sws1.

It localises to the cytoplasm. It is found in the nucleus. Functionally, involved in homologous recombination where it functions at an early stage of recombination in a pre-recombinogenic complex with rlp1 and sws1. Also has a role at a later stage of recombination in association with the rhp55-rhp57 complex. This chain is DNA repair protein rdl1 (rdl1), found in Schizosaccharomyces pombe (strain 972 / ATCC 24843) (Fission yeast).